Reading from the N-terminus, the 81-residue chain is Large ribosomal subunit protein bL27 (81 aa).

The segment covering Met-1–Lys-11 has biased composition (polar residues). The tract at residues Met-1–Arg-20 is disordered.

The protein belongs to the bacterial ribosomal protein bL27 family.

The chain is Large ribosomal subunit protein bL27 from Borreliella afzelii (strain PKo) (Borrelia afzelii).